The primary structure comprises 435 residues: MAEEKSFKYVIVGGGVAAGYAAREFFNQGVKPGELAIISREQVPPYERPALSKGYIHLENKATLPNFYVAAGIGGERQFPQWYKEKGIELILGTEIVKADLAAKTLVSGTGQVFKYQTLLAATGSSVIRLSDFGVPGADAKNIFYLRELEDADYLAYAMETKEKGKAVVVGGGYIGLELGAALKANNLDVTMVYPEPWCMPRLFTAGIASFYEGYYANKGINIVKGTVASGFTTNSNGEVTEVKLKDGRTLEADIVIVGVGGRPIISLFKDQVEEEKGGLKTDGFFKTSLPDVYAIGDVATFPMKLYNEMRRVEHVDHARKSAEQAVKAIKAAEEGNSIPEYDYLPYFYSRAFDLSWQFYGDNVGESVLFGDNDPESPKPKFGSYWIKERKVVGAFLEGGSPEENNAIAKLARAQPSVESLEVLSKEGLSFATNI.

Residues 14–17 (GGVA), Glu41, Arg48, Lys53, Ile96, and 147–148 (RE) each bind FAD. NAD(+)-binding positions include 172–178 (GGYIGLE), Glu196, Arg202, and Gly261. 174 to 178 (YIGLE) is a binding site for NADP(+). Residues Arg202 and Gly261 each coordinate NADP(+). An FAD-binding site is contributed by Asp298. An NAD(+)-binding site is contributed by 314–315 (EH). NADP(+) is bound at residue 314-315 (EH). Val316 contacts FAD. Arg320 lines the L-ascorbate pocket. Residue Tyr349 coordinates FAD. Residue Tyr349 participates in NAD(+) binding. Tyr349 contributes to the NADP(+) binding site. L-ascorbate is bound at residue Arg351. Ser417 is subject to Phosphoserine.

It belongs to the FAD-dependent oxidoreductase family. It depends on FAD as a cofactor.

Its subcellular location is the cytoplasm. The catalysed reaction is 2 monodehydro-L-ascorbate radical + NADH + H(+) = 2 L-ascorbate + NAD(+). Catalyzes the conversion of monodehydroascorbate to ascorbate, oxidizing NADH in the process. This Arabidopsis thaliana (Mouse-ear cress) protein is Monodehydroascorbate reductase 2.